Reading from the N-terminus, the 456-residue chain is Adenylosuccinate lyase (456 aa).

Residues 15 to 16 (RY), 90 to 92 (NHD), and 122 to 123 (TS) contribute to the N(6)-(1,2-dicarboxyethyl)-AMP site. His-171 serves as the catalytic Proton donor/acceptor. N(6)-(1,2-dicarboxyethyl)-AMP is bound at residue Gln-247. The active-site Proton donor/acceptor is Ser-295. N(6)-(1,2-dicarboxyethyl)-AMP-binding positions include Ser-296, 301 to 303 (KVN), Asn-309, Arg-335, and 340 to 344 (STVLR).

This sequence belongs to the lyase 1 family. Adenylosuccinate lyase subfamily. As to quaternary structure, homotetramer. Residues from neighboring subunits contribute catalytic and substrate-binding residues to each active site.

The catalysed reaction is N(6)-(1,2-dicarboxyethyl)-AMP = fumarate + AMP. It carries out the reaction (2S)-2-[5-amino-1-(5-phospho-beta-D-ribosyl)imidazole-4-carboxamido]succinate = 5-amino-1-(5-phospho-beta-D-ribosyl)imidazole-4-carboxamide + fumarate. Its pathway is purine metabolism; AMP biosynthesis via de novo pathway; AMP from IMP: step 2/2. The protein operates within purine metabolism; IMP biosynthesis via de novo pathway; 5-amino-1-(5-phospho-D-ribosyl)imidazole-4-carboxamide from 5-amino-1-(5-phospho-D-ribosyl)imidazole-4-carboxylate: step 2/2. Catalyzes two reactions in de novo purine nucleotide biosynthesis. Catalyzes the breakdown of 5-aminoimidazole- (N-succinylocarboxamide) ribotide (SAICAR or 2-[5-amino-1-(5-phospho-beta-D-ribosyl)imidazole-4-carboxamido]succinate) to 5-aminoimidazole-4-carboxamide ribotide (AICAR or 5-amino-1-(5-phospho-beta-D-ribosyl)imidazole-4-carboxamide) and fumarate, and of adenylosuccinate (ADS or N(6)-(1,2-dicarboxyethyl)-AMP) to adenosine monophosphate (AMP) and fumarate. This Legionella pneumophila (strain Corby) protein is Adenylosuccinate lyase (purB).